The sequence spans 207 residues: Ribosomal RNA small subunit methyltransferase G (207 aa).

Residues glycine 73, leucine 78, 124 to 125 (VE), and arginine 139 contribute to the S-adenosyl-L-methionine site.

The protein belongs to the methyltransferase superfamily. RNA methyltransferase RsmG family.

It is found in the cytoplasm. The enzyme catalyses guanosine(527) in 16S rRNA + S-adenosyl-L-methionine = N(7)-methylguanosine(527) in 16S rRNA + S-adenosyl-L-homocysteine. Specifically methylates the N7 position of guanine in position 527 of 16S rRNA. This Enterobacter sp. (strain 638) protein is Ribosomal RNA small subunit methyltransferase G.